Consider the following 343-residue polypeptide: UDP-3-O-acylglucosamine N-acyltransferase (343 aa).

The active-site Proton acceptor is the His245.

Belongs to the transferase hexapeptide repeat family. LpxD subfamily. In terms of assembly, homotrimer.

It catalyses the reaction a UDP-3-O-[(3R)-3-hydroxyacyl]-alpha-D-glucosamine + a (3R)-hydroxyacyl-[ACP] = a UDP-2-N,3-O-bis[(3R)-3-hydroxyacyl]-alpha-D-glucosamine + holo-[ACP] + H(+). The protein operates within bacterial outer membrane biogenesis; LPS lipid A biosynthesis. In terms of biological role, catalyzes the N-acylation of UDP-3-O-acylglucosamine using 3-hydroxyacyl-ACP as the acyl donor. Is involved in the biosynthesis of lipid A, a phosphorylated glycolipid that anchors the lipopolysaccharide to the outer membrane of the cell. The chain is UDP-3-O-acylglucosamine N-acyltransferase from Phenylobacterium zucineum (strain HLK1).